A 304-amino-acid polypeptide reads, in one-letter code: 15-cis-phytoene synthase (304 aa).

The protein belongs to the phytoene/squalene synthase family. ATP is required as a cofactor. The cofactor is Mn(2+). Mg(2+) serves as cofactor.

It catalyses the reaction 2 (2E,6E,10E)-geranylgeranyl diphosphate = 15-cis-phytoene + 2 diphosphate. Its pathway is carotenoid biosynthesis; astaxanthin biosynthesis. It functions in the pathway carotenoid biosynthesis; phytoene biosynthesis. Involved in the biosynthesis of carotenoids for the production of astaxanthin. Catalyzes the condensation of two molecules of geranylgeranyl diphosphate (GGPP) to give prephytoene diphosphate (PPPP) and the subsequent rearrangement of the cyclopropylcarbinyl intermediate to yield 15-cis phytoene. The protein is 15-cis-phytoene synthase (crtB) of Paracoccus sp. (strain N81106 / MBIC 01143) (Agrobacterium aurantiacum).